The following is a 212-amino-acid chain: Small ribosomal subunit protein eS1 (212 aa).

The protein belongs to the eukaryotic ribosomal protein eS1 family.

This chain is Small ribosomal subunit protein eS1, found in Ignicoccus hospitalis (strain KIN4/I / DSM 18386 / JCM 14125).